The sequence spans 1569 residues: Pentafunctional AROM polypeptide (1569 aa).

The 3-dehydroquinate synthase stretch occupies residues 1 to 382 (MAEAKKPGPE…HEPRASVVDD (382 aa)). NAD(+)-binding positions include 49–51 (DTN), 84–87 (EASK), 115–117 (GGV), and Asp120. Position 131 (Arg131) interacts with 7-phospho-2-dehydro-3-deoxy-D-arabino-heptonate. NAD(+) is bound at residue 140-141 (TT). 7-phospho-2-dehydro-3-deoxy-D-arabino-heptonate is bound by residues Asp147 and Lys153. Lys162 lines the NAD(+) pocket. Asn163 is a 7-phospho-2-dehydro-3-deoxy-D-arabino-heptonate binding site. NAD(+) is bound by residues 180 to 183 (FLET) and Asn191. Position 195 (Glu195) interacts with Zn(2+). 7-phospho-2-dehydro-3-deoxy-D-arabino-heptonate contacts are provided by residues 195–198 (EVVK) and Lys248. Glu258 (proton acceptor; for 3-dehydroquinate synthase activity) is an active-site residue. Residues 262-266 (RNLLN) and His269 contribute to the 7-phospho-2-dehydro-3-deoxy-D-arabino-heptonate site. His269 is a binding site for Zn(2+). The active-site Proton acceptor; for 3-dehydroquinate synthase activity is His273. 7-phospho-2-dehydro-3-deoxy-D-arabino-heptonate-binding residues include His285 and Lys354. Residue His285 participates in Zn(2+) binding. The interval 395-837 (VTPGVPSNLD…WDILSQAFKV (443 aa)) is EPSP synthase. The active-site For EPSP synthase activity is the Cys819. The interval 859 to 1053 (ERSVFIIGMR…MEKDHSFFVS (195 aa)) is shikimate kinase. Residue 866–873 (GMRGAGKT) coordinates ATP. The 3-dehydroquinase stretch occupies residues 1054 to 1267 (LTVPDVSEAA…AAPGQMSAAE (214 aa)). His1170 functions as the Proton acceptor; for 3-dehydroquinate dehydratase activity in the catalytic mechanism. Catalysis depends on Lys1198, which acts as the Schiff-base intermediate with substrate; for 3-dehydroquinate dehydratase activity. A shikimate dehydrogenase region spans residues 1280–1569 (PCNFYLFGKP…RDARSAVLGL (290 aa)).

This sequence in the N-terminal section; belongs to the sugar phosphate cyclases superfamily. Dehydroquinate synthase family. It in the 2nd section; belongs to the EPSP synthase family. In the 3rd section; belongs to the shikimate kinase family. The protein in the 4th section; belongs to the type-I 3-dehydroquinase family. This sequence in the C-terminal section; belongs to the shikimate dehydrogenase family. Homodimer. Zn(2+) serves as cofactor.

Its subcellular location is the cytoplasm. The enzyme catalyses 7-phospho-2-dehydro-3-deoxy-D-arabino-heptonate = 3-dehydroquinate + phosphate. It carries out the reaction 3-dehydroquinate = 3-dehydroshikimate + H2O. The catalysed reaction is shikimate + NADP(+) = 3-dehydroshikimate + NADPH + H(+). It catalyses the reaction shikimate + ATP = 3-phosphoshikimate + ADP + H(+). The enzyme catalyses 3-phosphoshikimate + phosphoenolpyruvate = 5-O-(1-carboxyvinyl)-3-phosphoshikimate + phosphate. It participates in metabolic intermediate biosynthesis; chorismate biosynthesis; chorismate from D-erythrose 4-phosphate and phosphoenolpyruvate: step 2/7. The protein operates within metabolic intermediate biosynthesis; chorismate biosynthesis; chorismate from D-erythrose 4-phosphate and phosphoenolpyruvate: step 3/7. It functions in the pathway metabolic intermediate biosynthesis; chorismate biosynthesis; chorismate from D-erythrose 4-phosphate and phosphoenolpyruvate: step 4/7. Its pathway is metabolic intermediate biosynthesis; chorismate biosynthesis; chorismate from D-erythrose 4-phosphate and phosphoenolpyruvate: step 5/7. It participates in metabolic intermediate biosynthesis; chorismate biosynthesis; chorismate from D-erythrose 4-phosphate and phosphoenolpyruvate: step 6/7. Functionally, the AROM polypeptide catalyzes 5 consecutive enzymatic reactions in prechorismate polyaromatic amino acid biosynthesis. The sequence is that of Pentafunctional AROM polypeptide from Fusarium vanettenii (strain ATCC MYA-4622 / CBS 123669 / FGSC 9596 / NRRL 45880 / 77-13-4) (Fusarium solani subsp. pisi).